Consider the following 288-residue polypeptide: Proteasome assembly chaperone 1 (288 aa).

Residues 1–33 (MATFFGEVQSVFSRAVDEEEEDEDDDEEEEEDR) are disordered. A compositionally biased stretch (acidic residues) spans 17-33 (DEEEEDEDDDEEEEEDR).

This sequence belongs to the PSMG1 family. In terms of assembly, forms a heterodimer with psmg2. Post-translationally, degraded by the proteasome upon completion of 20S proteasome maturation.

The protein localises to the cytoplasm. Its subcellular location is the endoplasmic reticulum. Chaperone protein which promotes assembly of the 20S proteasome as part of a heterodimer with psmg2. The protein is Proteasome assembly chaperone 1 of Xenopus laevis (African clawed frog).